Reading from the N-terminus, the 280-residue chain is Four and a half LIM domains protein 1 (280 aa).

Serine 2 bears the N-acetylserine mark. Lysine 4 bears the N6-acetyllysine mark. Residues 7 to 31 form a C4-type zinc finger; that stretch reads CHYCRDPLQGKKYVQKDGRHCCLKC. LIM zinc-binding domains lie at 40–92, 101–153, 162–212, and 221–276; these read CVEC…CNKC, CKGC…CVTC, CVKC…CVDC, and CAGC…CPDC. Lysine 86 is covalently cross-linked (Glycyl lysine isopeptide (Lys-Gly) (interchain with G-Cter in SUMO2)).

The protein localises to the cytoplasm. Functionally, may have an involvement in muscle development or hypertrophy. Isoform 2 binds to RBP-J and plays a negative regulatory role in the RBP-J-mediated transcription in mammalian systems. This is Four and a half LIM domains protein 1 (Fhl1) from Rattus norvegicus (Rat).